Consider the following 213-residue polypeptide: Large ribosomal subunit protein uL3 (213 aa).

The disordered stretch occupies residues 131–155 (GRASHGNSVSHRAHGSTGNNQDPGR). Residues 135–152 (HGNSVSHRAHGSTGNNQD) show a composition bias toward polar residues. At glutamine 151 the chain carries N5-methylglutamine.

The protein belongs to the universal ribosomal protein uL3 family. In terms of assembly, part of the 50S ribosomal subunit. Forms a cluster with proteins L14 and L19. In terms of processing, methylated by PrmB.

In terms of biological role, one of the primary rRNA binding proteins, it binds directly near the 3'-end of the 23S rRNA, where it nucleates assembly of the 50S subunit. The polypeptide is Large ribosomal subunit protein uL3 (Agrobacterium fabrum (strain C58 / ATCC 33970) (Agrobacterium tumefaciens (strain C58))).